A 304-amino-acid chain; its full sequence is Aspartate carbamoyltransferase catalytic subunit (304 aa).

R54 and T55 together coordinate carbamoyl phosphate. Position 83 (K83) interacts with L-aspartate. Carbamoyl phosphate is bound by residues R104, H132, and Q135. Positions 165 and 226 each coordinate L-aspartate. 2 residues coordinate carbamoyl phosphate: L265 and P266.

The protein belongs to the aspartate/ornithine carbamoyltransferase superfamily. ATCase family. Heterooligomer of catalytic and regulatory chains.

It catalyses the reaction carbamoyl phosphate + L-aspartate = N-carbamoyl-L-aspartate + phosphate + H(+). It functions in the pathway pyrimidine metabolism; UMP biosynthesis via de novo pathway; (S)-dihydroorotate from bicarbonate: step 2/3. Catalyzes the condensation of carbamoyl phosphate and aspartate to form carbamoyl aspartate and inorganic phosphate, the committed step in the de novo pyrimidine nucleotide biosynthesis pathway. This Pyrobaculum islandicum (strain DSM 4184 / JCM 9189 / GEO3) protein is Aspartate carbamoyltransferase catalytic subunit.